Consider the following 103-residue polypeptide: Large ribosomal subunit protein uL24 (103 aa).

This sequence belongs to the universal ribosomal protein uL24 family. As to quaternary structure, part of the 50S ribosomal subunit.

Its function is as follows. One of two assembly initiator proteins, it binds directly to the 5'-end of the 23S rRNA, where it nucleates assembly of the 50S subunit. One of the proteins that surrounds the polypeptide exit tunnel on the outside of the subunit. The sequence is that of Large ribosomal subunit protein uL24 from Listeria innocua serovar 6a (strain ATCC BAA-680 / CLIP 11262).